The following is a 411-amino-acid chain: UPF0754 membrane protein Npun_R4433 (411 aa).

2 consecutive transmembrane segments (helical) span residues 3-23 (WSHLWLYVSPPVLGGIIGYFT) and 387-407 (IVTLGGVLGFVIGLLQTVFLV).

The protein belongs to the UPF0754 family.

The protein resides in the cell inner membrane. This Nostoc punctiforme (strain ATCC 29133 / PCC 73102) protein is UPF0754 membrane protein Npun_R4433.